Here is a 99-residue protein sequence, read N- to C-terminus: Aspartyl/glutamyl-tRNA(Asn/Gln) amidotransferase subunit C (99 aa).

The protein belongs to the GatC family. As to quaternary structure, heterotrimer of A, B and C subunits.

The enzyme catalyses L-glutamyl-tRNA(Gln) + L-glutamine + ATP + H2O = L-glutaminyl-tRNA(Gln) + L-glutamate + ADP + phosphate + H(+). It carries out the reaction L-aspartyl-tRNA(Asn) + L-glutamine + ATP + H2O = L-asparaginyl-tRNA(Asn) + L-glutamate + ADP + phosphate + 2 H(+). Allows the formation of correctly charged Asn-tRNA(Asn) or Gln-tRNA(Gln) through the transamidation of misacylated Asp-tRNA(Asn) or Glu-tRNA(Gln) in organisms which lack either or both of asparaginyl-tRNA or glutaminyl-tRNA synthetases. The reaction takes place in the presence of glutamine and ATP through an activated phospho-Asp-tRNA(Asn) or phospho-Glu-tRNA(Gln). In Variovorax paradoxus (strain S110), this protein is Aspartyl/glutamyl-tRNA(Asn/Gln) amidotransferase subunit C.